The sequence spans 131 residues: ATP synthase epsilon chain, chloroplastic (131 aa).

Belongs to the ATPase epsilon chain family. In terms of assembly, F-type ATPases have 2 components, CF(1) - the catalytic core - and CF(0) - the membrane proton channel. CF(1) has five subunits: alpha(3), beta(3), gamma(1), delta(1), epsilon(1). CF(0) has three main subunits: a, b and c.

Its subcellular location is the plastid. The protein localises to the chloroplast thylakoid membrane. Its function is as follows. Produces ATP from ADP in the presence of a proton gradient across the membrane. The sequence is that of ATP synthase epsilon chain, chloroplastic from Guillardia theta (Cryptophyte).